The following is a 708-amino-acid chain: Otogelin-like protein (708 aa).

Positions 1–113 (KIIVNRLARK…SWEIEKSFEV (113 aa)) constitute a VWFD domain. An N-linked (GlcNAc...) asparagine glycan is attached at Asn553. 4 disulfide bridges follow: Cys616/Cys672, Cys637/Cys686, Cys648/Cys703, and Cys652/Cys705. The 93-residue stretch at 616-708 (CKREERICQK…EPIDCTCQWN (93 aa)) folds into the CTCK domain.

This sequence belongs to the otogelin family.

It is found in the secreted. This Pongo abelii (Sumatran orangutan) protein is Otogelin-like protein (OTOGL).